The primary structure comprises 220 residues: MAATSSSPPCNISASSLLLRQPSRSILKVFGLLPPVSRNNRKLGRLTVTRSNLAQDFLGDFGARDPYPEEIASQFGDKVLGCQSTEHKILIPNASVLSLSQLQCSPVSSSQPPLSGDDARTLLHKVLGWSIVDNEAGGLKIRCMWKVRDFGCGVELINRIHKVAEASGHYPSLHLESPTQVRAELFTSSIGGLSMNDFIMAAKIDDIKTSDLSPRKRAWA.

Residues methionine 1–arginine 50 constitute a chloroplast transit peptide.

Belongs to the pterin-4-alpha-carbinolamine dehydratase family. Interacts with SDIR1. Interacts with AIRP2. In terms of processing, ubiquitinated by SDIR1. Ubiquitination leads to its subsequent degradation, thus controlling abscisic acid (ABA) signaling. Ubiquitinated by AIRP2. Ubiquitination leads to its subsequent degradation, thus controlling abscisic acid (ABA) signaling during drought stress.

The protein localises to the plastid. The protein resides in the chloroplast. Its subcellular location is the cell membrane. It localises to the nucleus. It catalyses the reaction (4aS,6R)-4a-hydroxy-L-erythro-5,6,7,8-tetrahydrobiopterin = (6R)-L-erythro-6,7-dihydrobiopterin + H2O. Functionally, involved in tetrahydrobiopterin biosynthesis. Interacts with and acts downstream of the E3 ubiquitin-protein ligase SDIR1 in abscisic acid (ABA) and salt stress signaling. Regulates the expression of the bZIP transcription factor ABI5, which mediates responses to ABA during seed germination and salt stress. The SDIR1-ATP1/SDIRIP1 complex plays an important role in ABA signaling through the ubiquitination pathway. Acts downstream of AIRP2 in regulation of ABA signaling during drought stress. This Arabidopsis thaliana (Mouse-ear cress) protein is Probable pterin-4-alpha-carbinolamine dehydratase, chloroplastic.